The following is a 131-amino-acid chain: Con-Ins Q1b (131 aa).

An N-terminal signal peptide occupies residues 1–24 (MTTSSYFLLVALGLLLYLCQSSFG). 4 cysteine pairs are disulfide-bonded: Cys29–Cys107, Cys41–Cys110, Cys53–Cys123, and Cys109–Cys114. A propeptide spans 59–92 (LQGGTDDARKKRGRASLLRKRRGFLSMLKARAKR) (c peptide). 4-carboxyglutamate; partial is present on Glu118. Residue Ser130 is modified to Serine amide.

This sequence belongs to the insulin family. As to quaternary structure, heterodimer of A and B chains; disulfide-linked. As to expression, expressed by the venom gland.

Its subcellular location is the secreted. Functionally, this venom insulin facilitates prey capture by rapidly inducing hypoglycemic shock. Intraperitoneal injection of this peptide into zebrafish lowers blood glucose with the same potency than human insulin. In vivo, when applied to water, this peptide reduces overall locomotor activity of zebrafish larvae, observed as a significant decrease in the percentage of time spent swimming and movement frequency. This Conus quercinus (Oak cone) protein is Con-Ins Q1b.